Consider the following 124-residue polypeptide: Hydrogenase maturation factor HypA (124 aa).

His-2 provides a ligand contact to Ni(2+). Zn(2+)-binding residues include Cys-78, Cys-81, Cys-97, and Cys-100.

It belongs to the HypA/HybF family.

Functionally, involved in the maturation of [NiFe] hydrogenases. Required for nickel insertion into the metal center of the hydrogenase. This chain is Hydrogenase maturation factor HypA, found in Methanocaldococcus jannaschii (strain ATCC 43067 / DSM 2661 / JAL-1 / JCM 10045 / NBRC 100440) (Methanococcus jannaschii).